We begin with the raw amino-acid sequence, 144 residues long: Bacilliredoxin BH1716 (144 aa).

It belongs to the bacilliredoxin family.

This chain is Bacilliredoxin BH1716, found in Halalkalibacterium halodurans (strain ATCC BAA-125 / DSM 18197 / FERM 7344 / JCM 9153 / C-125) (Bacillus halodurans).